The following is a 309-amino-acid chain: Acetyl-coenzyme A carboxylase carboxyl transferase subunit beta (309 aa).

Residues 27–296 (LWKKCPKCGA…PGTEAPIEFE (270 aa)) enclose the CoA carboxyltransferase N-terminal domain. Residues C31, C34, C50, and C53 each contribute to the Zn(2+) site. The C4-type zinc finger occupies 31–53 (CPKCGAFLYKPELEKNLDVCPKC). Residues 288–309 (GTEAPIEFEVTEKPDVDEPEGQ) are disordered.

Belongs to the AccD/PCCB family. In terms of assembly, acetyl-CoA carboxylase is a heterohexamer composed of biotin carboxyl carrier protein (AccB), biotin carboxylase (AccC) and two subunits each of ACCase subunit alpha (AccA) and ACCase subunit beta (AccD). The cofactor is Zn(2+).

The protein localises to the cytoplasm. It catalyses the reaction N(6)-carboxybiotinyl-L-lysyl-[protein] + acetyl-CoA = N(6)-biotinyl-L-lysyl-[protein] + malonyl-CoA. The protein operates within lipid metabolism; malonyl-CoA biosynthesis; malonyl-CoA from acetyl-CoA: step 1/1. Component of the acetyl coenzyme A carboxylase (ACC) complex. Biotin carboxylase (BC) catalyzes the carboxylation of biotin on its carrier protein (BCCP) and then the CO(2) group is transferred by the transcarboxylase to acetyl-CoA to form malonyl-CoA. The polypeptide is Acetyl-coenzyme A carboxylase carboxyl transferase subunit beta (Marinobacter nauticus (strain ATCC 700491 / DSM 11845 / VT8) (Marinobacter aquaeolei)).